The following is a 468-amino-acid chain: ATP synthase subunit beta (468 aa).

155–162 (GGAGVGKT) is a binding site for ATP.

Belongs to the ATPase alpha/beta chains family. As to quaternary structure, F-type ATPases have 2 components, CF(1) - the catalytic core - and CF(0) - the membrane proton channel. CF(1) has five subunits: alpha(3), beta(3), gamma(1), delta(1), epsilon(1). CF(0) has three main subunits: a(1), b(2) and c(9-12). The alpha and beta chains form an alternating ring which encloses part of the gamma chain. CF(1) is attached to CF(0) by a central stalk formed by the gamma and epsilon chains, while a peripheral stalk is formed by the delta and b chains.

It is found in the cell membrane. It catalyses the reaction ATP + H2O + 4 H(+)(in) = ADP + phosphate + 5 H(+)(out). Functionally, produces ATP from ADP in the presence of a proton gradient across the membrane. The catalytic sites are hosted primarily by the beta subunits. In Bacillus cereus (strain B4264), this protein is ATP synthase subunit beta.